Here is a 145-residue protein sequence, read N- to C-terminus: Basic leucine zipper 1 (145 aa).

Residues 1 to 11 are compositionally biased toward polar residues; it reads MANAEKTSSGS. Positions 1–39 are disordered; that stretch reads MANAEKTSSGSDIDEKKRKRKLSNRESARRSRLKKQKLM. Residues 14–77 form the bZIP domain; it reads DEKKRKRKLS…DSVETENAGL (64 aa). The tract at residues 16–37 is basic motif; sequence KKRKRKLSNRESARRSRLKKQK. The segment at 46-53 is leucine-zipper; that stretch reads ISSLERRI.

It belongs to the bZIP family. Interacts with ZFP7, BZIP4, BZIP9, BZIP10, BZIP11, BZIP25, BZIP42, BZIP44, BZIP53, BZIP58 and BZIP63. As to expression, expressed in both shoots, including young leaves, stipulae and trichomes (except in cotyledons and hypocotyl), and roots, including vascular tissues (e.g. in both the phloem and the xylem). Present in seeds and pollen. Restricted to vasculatures and roots in the presence of sucrose or glucose.

The protein resides in the nucleus. Functionally, transcription factor that binds to the C-box-like motif (5'-TGCTGACGTCA-3') and G-box-like motif (5'-CCACGTGGCC-3'), ABRE elements, of gene promoters involved in sugar signaling. Activated by low energy stress both at transcriptional and post-transcriptional mechanisms. Promotes dark-induced senescence and participates in the transcriptional reprogramming of amino acid metabolism during the dark-induced starvation response. Transcription activator of the mannan synthase CSLA9. Recognizes and binds to DNA-specific sequence of CSLA9 promoter. The polypeptide is Basic leucine zipper 1 (BZIP1) (Arabidopsis thaliana (Mouse-ear cress)).